Here is a 360-residue protein sequence, read N- to C-terminus: MTSKTVLYAKHLEAGAKMVDFHGWEMPINYGSQIEEHNAVRNDAGMFDVSHMTIVDIQGEQAQAFLQKLVANDVAKLTVPGKALYTPMLNEQGGVIDDLIIYFFSNTSYRLVVNSATREKDLAHLAKISADFAVTVTERNEFGMIAVQGPNAKAKTATLLTAEQNAAIEGMKPFFGVQTGDLFIATTGYTGEDGYEIVVPKEQAADLWQQLLDAGVAPAGLGARDTLRLEAGMNLYGLDMDESVSPLAANMAWTIAWEPQSRDFIGRDVLVQQRADQSTDKQVGLVLEEKGILRSGSKVIVDGGEGVITSGTFSPTLGYSVALARVPRSTGDTAQVEMRKKLVTVKVVKPGFVRNGKSIL.

Belongs to the GcvT family. As to quaternary structure, the glycine cleavage system is composed of four proteins: P, T, L and H.

The catalysed reaction is N(6)-[(R)-S(8)-aminomethyldihydrolipoyl]-L-lysyl-[protein] + (6S)-5,6,7,8-tetrahydrofolate = N(6)-[(R)-dihydrolipoyl]-L-lysyl-[protein] + (6R)-5,10-methylene-5,6,7,8-tetrahydrofolate + NH4(+). Its function is as follows. The glycine cleavage system catalyzes the degradation of glycine. This is Aminomethyltransferase from Pseudoalteromonas translucida (strain TAC 125).